Reading from the N-terminus, the 429-residue chain is Glutamyl-tRNA reductase (429 aa).

Substrate contacts are provided by residues Thr-56–Arg-59, Ser-119, Glu-124–Gln-126, and Gln-130. Cys-57 functions as the Nucleophile in the catalytic mechanism. Gly-199–Ile-204 provides a ligand contact to NADP(+).

It belongs to the glutamyl-tRNA reductase family. Homodimer.

It carries out the reaction (S)-4-amino-5-oxopentanoate + tRNA(Glu) + NADP(+) = L-glutamyl-tRNA(Glu) + NADPH + H(+). It functions in the pathway porphyrin-containing compound metabolism; protoporphyrin-IX biosynthesis; 5-aminolevulinate from L-glutamyl-tRNA(Glu): step 1/2. Its function is as follows. Catalyzes the NADPH-dependent reduction of glutamyl-tRNA(Glu) to glutamate 1-semialdehyde (GSA). The protein is Glutamyl-tRNA reductase of Herminiimonas arsenicoxydans.